Reading from the N-terminus, the 148-residue chain is MASTIFVLNGPNLNALGKREPGIYGGKTLADIEAMCKAEAKLLGFDIDFRQSNHEGTLVDWLHEAGEKSVGIAINPAAYGHTSIAMHDAIRAITVPVVELHLSNIHAREEFRHKSMIAPAVKGVICGFGAQSYILALHALKNLTEKSK.

The active-site Proton acceptor is the Tyr-24. 3 residues coordinate substrate: Asn-75, His-81, and Asp-88. His-101 serves as the catalytic Proton donor. Substrate-binding positions include Leu-102–Ser-103 and Arg-112.

This sequence belongs to the type-II 3-dehydroquinase family. Homododecamer.

The enzyme catalyses 3-dehydroquinate = 3-dehydroshikimate + H2O. It functions in the pathway metabolic intermediate biosynthesis; chorismate biosynthesis; chorismate from D-erythrose 4-phosphate and phosphoenolpyruvate: step 3/7. Catalyzes a trans-dehydration via an enolate intermediate. This Sinorhizobium medicae (strain WSM419) (Ensifer medicae) protein is 3-dehydroquinate dehydratase.